The following is a 278-amino-acid chain: Nucleotide-binding protein Tbd_0529 (278 aa).

8–15 (GLSGSGKS) lines the ATP pocket. Residue 57 to 60 (DARS) participates in GTP binding.

Belongs to the RapZ-like family.

Displays ATPase and GTPase activities. This chain is Nucleotide-binding protein Tbd_0529, found in Thiobacillus denitrificans (strain ATCC 25259 / T1).